A 158-amino-acid chain; its full sequence is NADH-quinone oxidoreductase subunit B (158 aa).

[4Fe-4S] cluster contacts are provided by Cys-37, Cys-38, Cys-102, and Cys-132.

The protein belongs to the complex I 20 kDa subunit family. As to quaternary structure, NDH-1 is composed of 14 different subunits. Subunits NuoB, C, D, E, F, and G constitute the peripheral sector of the complex. Requires [4Fe-4S] cluster as cofactor.

The protein localises to the cell inner membrane. It catalyses the reaction a quinone + NADH + 5 H(+)(in) = a quinol + NAD(+) + 4 H(+)(out). Functionally, NDH-1 shuttles electrons from NADH, via FMN and iron-sulfur (Fe-S) centers, to quinones in the respiratory chain. The immediate electron acceptor for the enzyme in this species is believed to be ubiquinone. Couples the redox reaction to proton translocation (for every two electrons transferred, four hydrogen ions are translocated across the cytoplasmic membrane), and thus conserves the redox energy in a proton gradient. This is NADH-quinone oxidoreductase subunit B from Acidithiobacillus ferrooxidans (strain ATCC 23270 / DSM 14882 / CIP 104768 / NCIMB 8455) (Ferrobacillus ferrooxidans (strain ATCC 23270)).